A 591-amino-acid polypeptide reads, in one-letter code: L-fucose isomerase (591 aa).

Residues Glu337 and Asp361 each act as proton acceptor in the active site. The Mn(2+) site is built by Glu337, Asp361, and His528.

The protein belongs to the L-fucose isomerase family. Homohexamer. Mn(2+) is required as a cofactor.

It localises to the cytoplasm. The catalysed reaction is L-fucose = L-fuculose. It participates in carbohydrate degradation; L-fucose degradation; L-lactaldehyde and glycerone phosphate from L-fucose: step 1/3. Functionally, converts the aldose L-fucose into the corresponding ketose L-fuculose. In Escherichia coli O139:H28 (strain E24377A / ETEC), this protein is L-fucose isomerase.